We begin with the raw amino-acid sequence, 311 residues long: MSSRRKPEWLKMRPPSGERFTDIKETLRDNDLHTVCEEASCPNMGECWSGRDGPGTATFMLMGDRCSRGCNFCDVKTGGMEPLDPDEPANVAESVAEIGLDYVVLTSVDRDDLDDQGAGHFARTIREIKERDPSILVEVLIPDFQGEKSLVQKIIDAGPDVIAHNIETVARRQVPVRDRRAGYEQSLSVLEYVTRESDIYTKTSIMLGVGEYDHEVYQTLGDLREAGVDVVTLGQYLQPSRSHLDVADYVHPQKFETWQRVAESEFGFLYCASGPMVRSSYKAGELFVDAVLREGKSVQEARRNARRAASE.

Positions 36, 41, 47, 66, 70, 73, and 280 each coordinate [4Fe-4S] cluster. Residues 51–269 form the Radical SAM core domain; sequence RDGPGTATFM…RVAESEFGFL (219 aa).

Belongs to the radical SAM superfamily. Lipoyl synthase family. Requires [4Fe-4S] cluster as cofactor.

The protein localises to the cytoplasm. The enzyme catalyses [[Fe-S] cluster scaffold protein carrying a second [4Fe-4S](2+) cluster] + N(6)-octanoyl-L-lysyl-[protein] + 2 oxidized [2Fe-2S]-[ferredoxin] + 2 S-adenosyl-L-methionine + 4 H(+) = [[Fe-S] cluster scaffold protein] + N(6)-[(R)-dihydrolipoyl]-L-lysyl-[protein] + 4 Fe(3+) + 2 hydrogen sulfide + 2 5'-deoxyadenosine + 2 L-methionine + 2 reduced [2Fe-2S]-[ferredoxin]. It participates in protein modification; protein lipoylation via endogenous pathway; protein N(6)-(lipoyl)lysine from octanoyl-[acyl-carrier-protein]: step 2/2. Its function is as follows. Catalyzes the radical-mediated insertion of two sulfur atoms into the C-6 and C-8 positions of the octanoyl moiety bound to the lipoyl domains of lipoate-dependent enzymes, thereby converting the octanoylated domains into lipoylated derivatives. In Halobacterium salinarum (strain ATCC 29341 / DSM 671 / R1), this protein is Lipoyl synthase.